Consider the following 102-residue polypeptide: Iron-sulfur cluster assembly protein CyaY (102 aa).

This sequence belongs to the frataxin family.

Involved in iron-sulfur (Fe-S) cluster assembly. May act as a regulator of Fe-S biogenesis. This chain is Iron-sulfur cluster assembly protein CyaY, found in Actinobacillus succinogenes (strain ATCC 55618 / DSM 22257 / CCUG 43843 / 130Z).